A 345-amino-acid polypeptide reads, in one-letter code: SLAM family member 5 (345 aa).

The first 21 residues, 1–21 (MAQHHLWILLLCLQTWPEAAG), serve as a signal peptide directing secretion. The Extracellular portion of the chain corresponds to 22 to 225 (KDSEIFTVNG…AMGFRTHHTG (204 aa)). Residues 26-129 (IFTVNGILGE…TTKRYNLQIY (104 aa)) enclose the Ig-like V-type domain. Residues 135–207 (PKITQSLMAS…PVSNNSDSIS (73 aa)) form the Ig-like C2-type domain. N-linked (GlcNAc...) asparagine glycosylation is present at Asn150. An intrachain disulfide couples Cys155 to Cys193. A helical transmembrane segment spans residues 226–246 (LLSVLAMFFLLVLILSSVFLF). At 247 to 345 (RLFKRRQGRI…PGTSSYEIVI (99 aa)) the chain is on the cytoplasmic side. Positions 277–282 (TIYTYI) match the ITSM 1 motif. Phosphotyrosine is present on Tyr279. At Tyr296 the chain carries Phosphotyrosine; by LYN. An ITSM 2 motif is present at residues 314–319 (TVYSEV). At Tyr316 the chain carries Phosphotyrosine. The tract at residues 326–345 (GKASTQDSKPPGTSSYEIVI) is disordered. The segment covering 328-345 (ASTQDSKPPGTSSYEIVI) has biased composition (polar residues). Position 341 is a phosphotyrosine; by FES (Tyr341).

In terms of assembly, homodimer; via its extracellular domain. Forms a head to tail dimer with a CD48 molecule from another cell. Interacts with SH2 domain-containing proteins SH2D1A/SAP and SH2D1B/EAT-2. Interacts with tyrosine-protein phosphatases PTPN6/SHP-1 and PTPN11//SHP-2 via its phosphorylated cytoplasmic domain, and this interaction is blocked by SH2D1A. Interacts (via phosphorylated ITSM 1 and 2) with INPP5D/SHIP1. Phosphorylated by tyrosine-protein kinase LCK on tyrosine residues following ligation induced by agonist monoclonal antibody. The association with SH2D1A is dependent of tyrosine phosphorylation of its cytoplasmic domain. Phosphorylated on Tyr-296 and Tyr-316 following platelet aggregation. Phosphorylated on tyrosine residues upon high affinity immunoglobulin epsilon receptor aggregation in mast cells. Post-translationally, N-glycosylated. In terms of tissue distribution, predominantly expressed in hematopoietic tissues, such as lymph node, spleen and peripheral leukocytes. Expressed in macrophages, B-cells, monocytes, platelets, thymocytes, T-cells and dendritic cells. Highly expressed in memory T-cells. Expressed in mast cells.

Its subcellular location is the cell membrane. Functionally, self-ligand receptor of the signaling lymphocytic activation molecule (SLAM) family. SLAM receptors triggered by homo- or heterotypic cell-cell interactions are modulating the activation and differentiation of a wide variety of immune cells and thus are involved in the regulation and interconnection of both innate and adaptive immune response. Activities are controlled by presence or absence of small cytoplasmic adapter proteins, SH2D1A/SAP and/or SH2D1B/EAT-2. Can mediate natural killer (NK) cell cytotoxicity dependent on SH2D1A and SH2D1B. Increases proliferative responses of activated T-cells and SH2D1A/SAP does not seem be required for this process. Homophilic interactions enhance interferon gamma/IFNG secretion in lymphocytes and induce platelet stimulation via a SH2D1A-dependent pathway. May serve as a marker for hematopoietic progenitor cells Required for a prolonged T-cell:B-cell contact, optimal T follicular helper function, and germinal center formation. In germinal centers involved in maintaining B-cell tolerance and in preventing autoimmunity. In mast cells negatively regulates high affinity immunoglobulin epsilon receptor signaling; independent of SH2D1A and SH2D1B but implicating FES and PTPN6/SHP-1. In macrophages enhances LPS-induced MAPK phosphorylation and NF-kappaB activation and modulates LPS-induced cytokine secretion; involving ITSM 2. Positively regulates macroautophagy in primary dendritic cells via stabilization of IRF8; inhibits TRIM21-mediated proteasomal degradation of IRF8. The polypeptide is SLAM family member 5 (CD84) (Homo sapiens (Human)).